Here is a 555-residue protein sequence, read N- to C-terminus: Glutamine--tRNA ligase (555 aa).

The 'HIGH' region signature appears at 34–44 (PEPNGYLHIGH). ATP contacts are provided by residues 35–37 (EPN) and 41–47 (HIGHAKS). The L-glutamine site is built by Asp-67 and Tyr-212. Residues Thr-231, 261–262 (RL), and 269–271 (MSK) each bind ATP. Residues 268–272 (VMSKR) carry the 'KMSKS' region motif.

The protein belongs to the class-I aminoacyl-tRNA synthetase family. In terms of assembly, monomer.

It localises to the cytoplasm. It carries out the reaction tRNA(Gln) + L-glutamine + ATP = L-glutaminyl-tRNA(Gln) + AMP + diphosphate. The protein is Glutamine--tRNA ligase of Cronobacter sakazakii (strain ATCC BAA-894) (Enterobacter sakazakii).